A 166-amino-acid chain; its full sequence is Small ribosomal subunit protein uS5 (166 aa).

One can recognise an S5 DRBM domain in the interval 11 to 74 (LQEKLVAVNR…EQARRNMVKV (64 aa)).

This sequence belongs to the universal ribosomal protein uS5 family. Part of the 30S ribosomal subunit. Contacts proteins S4 and S8.

In terms of biological role, with S4 and S12 plays an important role in translational accuracy. Located at the back of the 30S subunit body where it stabilizes the conformation of the head with respect to the body. The protein is Small ribosomal subunit protein uS5 of Tolumonas auensis (strain DSM 9187 / NBRC 110442 / TA 4).